The following is an 84-amino-acid chain: Putative defensin-like protein 114 (84 aa).

Residues 1-24 (MAITKKCFAAFVLILLFVMPFVYC) form the signal peptide. Cystine bridges form between cysteine 41/cysteine 81, cysteine 47/cysteine 69, cysteine 54/cysteine 79, and cysteine 58/cysteine 80.

It belongs to the DEFL family.

It is found in the secreted. This is Putative defensin-like protein 114 from Arabidopsis thaliana (Mouse-ear cress).